Reading from the N-terminus, the 156-residue chain is D-aminoacyl-tRNA deacylase (156 aa).

The Gly-cisPro motif, important for rejection of L-amino acids motif lies at 139-140 (GP).

This sequence belongs to the DTD family. Homodimer.

It localises to the cytoplasm. It catalyses the reaction glycyl-tRNA(Ala) + H2O = tRNA(Ala) + glycine + H(+). The enzyme catalyses a D-aminoacyl-tRNA + H2O = a tRNA + a D-alpha-amino acid + H(+). In terms of biological role, an aminoacyl-tRNA editing enzyme that deacylates mischarged D-aminoacyl-tRNAs. Also deacylates mischarged glycyl-tRNA(Ala), protecting cells against glycine mischarging by AlaRS. Acts via tRNA-based rather than protein-based catalysis; rejects L-amino acids rather than detecting D-amino acids in the active site. By recycling D-aminoacyl-tRNA to D-amino acids and free tRNA molecules, this enzyme counteracts the toxicity associated with the formation of D-aminoacyl-tRNA entities in vivo and helps enforce protein L-homochirality. The polypeptide is D-aminoacyl-tRNA deacylase (Marinobacter nauticus (strain ATCC 700491 / DSM 11845 / VT8) (Marinobacter aquaeolei)).